The sequence spans 450 residues: Tubulin beta-6 chain (450 aa).

Glutamine 11, glutamate 71, serine 140, glycine 144, threonine 145, glycine 146, asparagine 206, and asparagine 228 together coordinate GTP. A Mg(2+)-binding site is contributed by glutamate 71. Residues 429-450 (DATVEDEEEYEGEEGLDENYET) are disordered. A compositionally biased stretch (acidic residues) spans 431-450 (TVEDEEEYEGEEGLDENYET).

This sequence belongs to the tubulin family. Dimer of alpha and beta chains. A typical microtubule is a hollow water-filled tube with an outer diameter of 25 nm and an inner diameter of 15 nM. Alpha-beta heterodimers associate head-to-tail to form protofilaments running lengthwise along the microtubule wall with the beta-tubulin subunit facing the microtubule plus end conferring a structural polarity. Microtubules usually have 13 protofilaments but different protofilament numbers can be found in some organisms and specialized cells. Requires Mg(2+) as cofactor.

It is found in the cytoplasm. The protein resides in the cytoskeleton. Its function is as follows. Tubulin is the major constituent of microtubules, a cylinder consisting of laterally associated linear protofilaments composed of alpha- and beta-tubulin heterodimers. Microtubules grow by the addition of GTP-tubulin dimers to the microtubule end, where a stabilizing cap forms. Below the cap, tubulin dimers are in GDP-bound state, owing to GTPase activity of alpha-tubulin. This Gossypium hirsutum (Upland cotton) protein is Tubulin beta-6 chain.